The chain runs to 880 residues: GRB2-associated and regulator of MAPK protein 2 (880 aa).

The interval 12-320 (RWSMGAFPLD…HFLLLTDTPR (309 aa)) is CABIT. Disordered regions lie at residues 385–407 (PGAV…PGDS), 461–483 (IVGP…SEAV), 527–548 (SSLS…GSGS), 569–611 (SESS…ADTP), and 633–713 (APFG…ELGQ). Composition is skewed to low complexity over residues 640-663 (PFSG…STSG) and 683-696 (QGYS…LSSS). Position 740 is a phosphoserine (serine 740). Residues 813-877 (SALSLEEVSR…KIMQFIKGWR (65 aa)) enclose the SAM domain.

This sequence belongs to the GAREM family.

Functionally, probable adapter protein that provides a critical link between cell surface epidermal growth factor receptor and the MAPK/ERK signaling pathway. The chain is GRB2-associated and regulator of MAPK protein 2 (Garem2) from Mus musculus (Mouse).